Reading from the N-terminus, the 929-residue chain is Urea transporter 2 (929 aa).

The segment covering 1-11 (MSDHPLKEMSD) has biased composition (basic and acidic residues). A disordered region spans residues 1 to 89 (MSDHPLKEMS…KRRESELPRR (89 aa)). The segment covering 31-42 (SELSSPTWPSSS) has biased composition (low complexity). Basic and acidic residues predominate over residues 55–88 (PEEKDLRSSDEDSHIVKIEKPNERSKRRESELPR). The next 9 membrane-spanning stretches (helical) occupy residues 133-155 (GAAQVMFVNNPLSGLIIFIGLLI), 162-179 (IAGALGTVVSTLAALALS), 184-204 (AIASGLHGYNGMLVGLLVAVF), 212-232 (WWLLFPVTFASMACPVISSAL), 241-261 (LPVFTLPFNIALTLYLAATGH), 310-330 (GGVILVALFISSPLICLHAAI), 349-371 (IYTGLWSYNCVLSCVAIGGMFYV), 378-399 (LLALVCALFCAYTGAALSNMMA), and 400-420 (VVGVPPGTWAFCLSTLTFLLL). Positions 451–480 (SDEQKPPNGGGGEQSHGGGQRKAEEGSETV) are disordered. Over residues 458-470 (NGGGGEQSHGGGQ) the composition is skewed to gly residues. Position 486 is a phosphoserine (serine 486). 4 helical membrane-spanning segments follow: residues 609 to 629 (GILIVLGLFVQNPWWAISGCL), 647 to 667 (AIAAGLHGYNGVLVGLLMAVF), 675 to 695 (WWLLLPVIVMSMTCPILSSAL), and 704 to 724 (LPVFTLPFNIAVTLYLAATGH). A glycan (N-linked (GlcNAc...) asparagine) is linked at asparagine 742. The next 4 membrane-spanning stretches (helical) occupy residues 773-793 (GGIFLVALFVSSPLICLHAAI), 812-832 (IYFGLCGFNSTLACIAIGGMF), 841-861 (LLAIACALFAAYLGAALANML), and 863-883 (VFGLPPCTWPFCLSALTFLLL).

This sequence belongs to the urea transporter family. In terms of assembly, interacts with SNAPIN which enhances its urea transport activity. Expressed in the inner medulla of the kidney. In terms of tissue distribution, expressed in both the inner and outer renal medulla of the kidney.

It is found in the apical cell membrane. Its subcellular location is the cell membrane. The catalysed reaction is urea(in) = urea(out). With respect to regulation, inhibited by phloretin. Activated by vasopressin, forskolin, 3-isobutyl-1-methylxanthine (IBMX) and cAMP. Inhibited by phloretin. Its activity is regulated as follows. Inhibited by urea analogs and phloretin and activated by forskolin. With respect to regulation, inhibited by phloretin and activated by forskolin. Mediates the transport of urea driven by a concentration gradient across the cell membrane of the kidney inner medullary collecting duct which is critical to the urinary concentrating mechanism. The sequence is that of Urea transporter 2 (Slc14a2) from Rattus norvegicus (Rat).